Here is a 240-residue protein sequence, read N- to C-terminus: MKIVSDAKHTGRTRCTIHCQNCSISQLCLPFTLSEHELTQLDNIIERKKPVQKSQIIFQSGDELRSIYAIRSGTIKSYTISESGEEQITAFHLPGDLVGFDAIMNMKHVGFAQALETSMICEIPFDILDDLAGKMPKIRHQIMRLMSNEIKSDQEMILLLSKMSAEEKLAAFLHNLSQRYAAPGFSAREFRLTMTRGDIGNYLGLTIETISRLLGRFQKSGMITVQGKYITINRMDELTV.

The essential for the oxygen-regulated activity stretch occupies residues 15–28 (CTIHCQNCSISQLC). The 74-residue stretch at 163–236 (MSAEEKLAAF…GKYITINRMD (74 aa)) folds into the HTH crp-type domain. Positions 196 to 215 (RGDIGNYLGLTIETISRLLG) form a DNA-binding region, H-T-H motif.

Its subcellular location is the cytoplasm. Its function is as follows. Confers a hemolytic phenotype on E.coli. May regulate, rather than mediate, hemolytic activity. The polypeptide is Regulatory protein HlyX (hlyX) (Actinobacillus pleuropneumoniae (Haemophilus pleuropneumoniae)).